Consider the following 286-residue polypeptide: D-tagatose-1,6-bisphosphate aldolase subunit KbaY (286 aa).

The Proton donor role is filled by aspartate 82. Histidine 83 and histidine 180 together coordinate Zn(2+). Position 181 (glycine 181) interacts with dihydroxyacetone phosphate. Residue histidine 208 participates in Zn(2+) binding. Dihydroxyacetone phosphate-binding positions include 209 to 211 and 230 to 233; these read GAS and NVAT.

The protein belongs to the class II fructose-bisphosphate aldolase family. TagBP aldolase KbaY subfamily. As to quaternary structure, homotetramer. Forms a complex with KbaZ. Requires Zn(2+) as cofactor.

The enzyme catalyses D-tagatofuranose 1,6-bisphosphate = D-glyceraldehyde 3-phosphate + dihydroxyacetone phosphate. The protein operates within carbohydrate metabolism; D-tagatose 6-phosphate degradation; D-glyceraldehyde 3-phosphate and glycerone phosphate from D-tagatose 6-phosphate: step 2/2. Its function is as follows. Catalytic subunit of the tagatose-1,6-bisphosphate aldolase KbaYZ, which catalyzes the reversible aldol condensation of dihydroxyacetone phosphate (DHAP or glycerone-phosphate) with glyceraldehyde 3-phosphate (G3P) to produce tagatose 1,6-bisphosphate (TBP). Requires KbaZ subunit for full activity and stability. This is D-tagatose-1,6-bisphosphate aldolase subunit KbaY from Escherichia coli O45:K1 (strain S88 / ExPEC).